The chain runs to 224 residues: Heme response regulator HssR (224 aa).

The Response regulatory domain maps to 3–116 (QCLVVDDDPR…ELIFRIRAVL (114 aa)). D52 carries the post-translational modification 4-aspartylphosphate. Residues 124–222 (NSEMTIGNLT…VRGQGYKVEN (99 aa)) constitute a DNA-binding region (ompR/PhoB-type).

In terms of processing, phosphorylated by HssS.

The protein localises to the cytoplasm. Its function is as follows. Member of the two-component regulatory system HssS/HssR involved in intracellular heme homeostasis and tempering of staphylococcal virulence. Phosphorylated HssR binds to a direct repeat sequence within hrtAB promoter and activates the expression of hrtAB, an efflux pump, in response to extracellular heme, hemin, hemoglobin or blood. This Staphylococcus aureus (strain Mu50 / ATCC 700699) protein is Heme response regulator HssR (hssR).